The following is a 116-amino-acid chain: Large ribosomal subunit protein uL18 (116 aa).

It belongs to the universal ribosomal protein uL18 family. In terms of assembly, part of the 50S ribosomal subunit; part of the 5S rRNA/L5/L18/L25 subcomplex. Contacts the 5S and 23S rRNAs.

In terms of biological role, this is one of the proteins that bind and probably mediate the attachment of the 5S RNA into the large ribosomal subunit, where it forms part of the central protuberance. This Pseudomonas putida (strain W619) protein is Large ribosomal subunit protein uL18.